The primary structure comprises 360 residues: Leukotriene B4 receptor 2 (360 aa).

At 1-24 (MSVCYRPPGNETLLSWKGSRATGT) the chain is on the extracellular side. The N-linked (GlcNAc...) asparagine glycan is linked to asparagine 10. Residues 25–45 (AFLLLAALLGLPGNGFVVWSL) form a helical membrane-spanning segment. At 46–60 (AGWRPTAGRPLAATL) the chain is on the cytoplasmic side. The chain crosses the membrane as a helical span at residues 61–81 (VLHLALADGAVLLLTPLFVAF). The Extracellular portion of the chain corresponds to 82 to 96 (LSQEAWPLGQVGCKA). Residues 97–117 (VYYVCALSMYASVLLTGLLSL) traverse the membrane as a helical segment. Topologically, residues 118 to 140 (QRCLAVTRPFLAPRLRSPALARR) are cytoplasmic. Residues 141–161 (LLLGVWLAALVLAVPAAVYRH) traverse the membrane as a helical segment. Over 162 to 185 (LWGGRVCQLCHPSPVHAAAHLSLE) the chain is Extracellular. The chain crosses the membrane as a helical span at residues 186-206 (TLTAFVLPFGTVLGCYGVTLA). Residues 207–224 (RLRGARWGSGRQGTRVGR) lie on the Cytoplasmic side of the membrane. Residues 225-245 (LVSAIVLAFGLLWAPYHAVNL) traverse the membrane as a helical segment. Topologically, residues 246–275 (LQAVAALAPPEGPLARLGGAGQAARAGTTA) are extracellular. A helical membrane pass occupies residues 276–296 (LAFFSSSVNPVLYVFTAGDLL). At 297 to 360 (PRAGPRFLTR…GKTEKDSQEW (64 aa)) the chain is on the cytoplasmic side. Positions 311-360 (SGEARGGSRSREGTMELRTTPKLKVMGQGRGNGDPGGGDGGKTEKDSQEW) are disordered. Gly residues predominate over residues 338–350 (QGRGNGDPGGGDG). A compositionally biased stretch (basic and acidic residues) spans 351–360 (GKTEKDSQEW).

It belongs to the G-protein coupled receptor 1 family.

It is found in the cell membrane. Low-affinity receptor for leukotrienes including leukotriene B4. Mediates chemotaxis of granulocytes and macrophages. The response is mediated via G-proteins that activate a phosphatidylinositol-calcium second messenger system. The sequence is that of Leukotriene B4 receptor 2 (Ltb4r2) from Mus musculus (Mouse).